A 485-amino-acid chain; its full sequence is Glutamyl-tRNA(Gln) amidotransferase subunit A (485 aa).

Catalysis depends on charge relay system residues Lys-79 and Ser-154. Ser-178 functions as the Acyl-ester intermediate in the catalytic mechanism.

The protein belongs to the amidase family. GatA subfamily. As to quaternary structure, heterotrimer of A, B and C subunits.

It catalyses the reaction L-glutamyl-tRNA(Gln) + L-glutamine + ATP + H2O = L-glutaminyl-tRNA(Gln) + L-glutamate + ADP + phosphate + H(+). Functionally, allows the formation of correctly charged Gln-tRNA(Gln) through the transamidation of misacylated Glu-tRNA(Gln) in organisms which lack glutaminyl-tRNA synthetase. The reaction takes place in the presence of glutamine and ATP through an activated gamma-phospho-Glu-tRNA(Gln). This is Glutamyl-tRNA(Gln) amidotransferase subunit A from Staphylococcus epidermidis (strain ATCC 35984 / DSM 28319 / BCRC 17069 / CCUG 31568 / BM 3577 / RP62A).